A 90-amino-acid polypeptide reads, in one-letter code: DNA-binding protein HU-alpha (90 aa).

This sequence belongs to the bacterial histone-like protein family. Heterodimer of an alpha and a beta chain.

Its function is as follows. Histone-like DNA-binding protein which is capable of wrapping DNA to stabilize it, and thus to prevent its denaturation under extreme environmental conditions. The sequence is that of DNA-binding protein HU-alpha (hupA) from Escherichia coli O157:H7.